Reading from the N-terminus, the 84-residue chain is LYR motif-containing protein 4B (84 aa).

Belongs to the complex I LYR family.

This Salmo salar (Atlantic salmon) protein is LYR motif-containing protein 4B (lyrm4b).